The chain runs to 137 residues: MKPSERRKARHCATQAIYQWQMTRANVGDIEEQFKIDQDTKGVDLNYFRDLLFGVALHCNELDKVFAPFLSRPLEEVDMVDKAILRLATYELTRRDDVPPRVVINEAIELAKAFAADDSHKFVNGVLDKVIKTLNKR.

Belongs to the NusB family.

Its function is as follows. Involved in transcription antitermination. Required for transcription of ribosomal RNA (rRNA) genes. Binds specifically to the boxA antiterminator sequence of the ribosomal RNA (rrn) operons. The sequence is that of Transcription antitermination protein NusB from Aeromonas salmonicida (strain A449).